A 511-amino-acid polypeptide reads, in one-letter code: Cysteine--tRNA ligase 2, cytoplasmic (511 aa).

Cys34 lines the Zn(2+) pocket. The 'HIGH' region signature appears at 36 to 46 (ITAYDFSHIGH). Positions 214, 239, and 243 each coordinate Zn(2+). The 'KMSKS' region signature appears at 271-275 (KMAKS). An ATP-binding site is contributed by Lys274. TPR repeat units lie at residues 315-348 (ESSSEALYYVYQTLQDLDEGLSPYQDALSEDGGK) and 368-401 (SKMLDDLNTAHILTGAYQDALKFINASLSKLKKM).

The protein belongs to the class-I aminoacyl-tRNA synthetase family. Requires Zn(2+) as cofactor.

Its subcellular location is the cytoplasm. It is found in the cytosol. The enzyme catalyses tRNA(Cys) + L-cysteine + ATP = L-cysteinyl-tRNA(Cys) + AMP + diphosphate. The chain is Cysteine--tRNA ligase 2, cytoplasmic from Arabidopsis thaliana (Mouse-ear cress).